The following is a 296-amino-acid chain: Phosphatidylglycerol--prolipoprotein diacylglyceryl transferase (296 aa).

Transmembrane regions (helical) follow at residues I10–F30, L57–Y77, V92–L112, and L119–G139. Residue R140 participates in a 1,2-diacyl-sn-glycero-3-phospho-(1'-sn-glycerol) binding. 3 helical membrane-spanning segments follow: residues Q194–M214, Y220–V240, and W254–A274.

It belongs to the Lgt family.

The protein localises to the cell inner membrane. It catalyses the reaction L-cysteinyl-[prolipoprotein] + a 1,2-diacyl-sn-glycero-3-phospho-(1'-sn-glycerol) = an S-1,2-diacyl-sn-glyceryl-L-cysteinyl-[prolipoprotein] + sn-glycerol 1-phosphate + H(+). The protein operates within protein modification; lipoprotein biosynthesis (diacylglyceryl transfer). Catalyzes the transfer of the diacylglyceryl group from phosphatidylglycerol to the sulfhydryl group of the N-terminal cysteine of a prolipoprotein, the first step in the formation of mature lipoproteins. The protein is Phosphatidylglycerol--prolipoprotein diacylglyceryl transferase of Xanthomonas oryzae pv. oryzae (strain MAFF 311018).